A 78-amino-acid polypeptide reads, in one-letter code: Small ribosomal subunit protein bS18 (78 aa).

This sequence belongs to the bacterial ribosomal protein bS18 family. Part of the 30S ribosomal subunit. Forms a tight heterodimer with protein bS6.

In terms of biological role, binds as a heterodimer with protein bS6 to the central domain of the 16S rRNA, where it helps stabilize the platform of the 30S subunit. This chain is Small ribosomal subunit protein bS18, found in Lactobacillus johnsonii (strain CNCM I-12250 / La1 / NCC 533).